The sequence spans 318 residues: Olfactory receptor 2T34 (318 aa).

The Extracellular segment spans residues 1–30 (MCSGNQTSQNQTASTDFTLTGLFAESKHAA). N-linked (GlcNAc...) asparagine glycosylation is found at Asn5 and Asn10. Residues 31–54 (LLYTVTFLLFLMALTGNALLILLI) traverse the membrane as a helical segment. Residues 55–62 (HSEPRLHT) lie on the Cytoplasmic side of the membrane. A helical transmembrane segment spans residues 63–84 (PMYFFISQLALMDLMYLCVTVP). Over 85 to 105 (KMLVGQVTGDDTISPSGCGIQ) the chain is Extracellular. A disulfide bond links Cys102 and Cys194. A helical membrane pass occupies residues 106 to 125 (MFFHLTLAGAEVFLLAAMAY). At 126 to 144 (DRYAAVCRPLHYPLLMNQR) the chain is on the cytoplasmic side. A helical transmembrane segment spans residues 145–163 (VCQLLVSACWVLGMVDGLL). Topologically, residues 164–200 (LTPITMSFPFCQSRKILSFFCETPALLKLSCSDVSLY) are extracellular. The chain crosses the membrane as a helical span at residues 201–224 (KMLTYLCCILMLLTPIMVISSSYT). The Cytoplasmic segment spans residues 225-241 (LILHLIHRMNSAAGRRK). The chain crosses the membrane as a helical span at residues 242-264 (ALATCSSHMIIVLLLFGASFYTY). Residues 265–277 (MLRSSYHTAEQDM) lie on the Extracellular side of the membrane. The chain crosses the membrane as a helical span at residues 278–297 (MVSAFYTIFTPVLNPLIYSL). At 298–318 (RNKDVTRALRSMMQSRMNQEK) the chain is on the cytoplasmic side.

The protein belongs to the G-protein coupled receptor 1 family.

Its subcellular location is the cell membrane. Functionally, odorant receptor. This is Olfactory receptor 2T34 (OR2T34) from Homo sapiens (Human).